The primary structure comprises 186 residues: TATA-box-binding protein E (186 aa).

2 repeat units span residues 10–86 and 101–179.

The protein belongs to the TBP family.

Functionally, general factor that plays a role in the activation of archaeal genes transcribed by RNA polymerase. Binds specifically to the TATA box promoter element which lies close to the position of transcription initiation. This chain is TATA-box-binding protein E (tbpE), found in Halobacterium salinarum (strain ATCC 700922 / JCM 11081 / NRC-1) (Halobacterium halobium).